Here is a 156-residue protein sequence, read N- to C-terminus: MPRRRKVPKREILPDPKFGNVEVAKFMNVLMLDGKKSVAERIVYGAFDHIEKKANKEPLEIFSTAMGNVKPMVEVKSRRVGGANYQVPVEVRPSRRSALAMRWLREAAKKRGEKSMAQRLANELLEAAEGRGGAMKKREEVHRMAEANKAFSHFRF.

Belongs to the universal ribosomal protein uS7 family. Part of the 30S ribosomal subunit. Contacts proteins S9 and S11.

One of the primary rRNA binding proteins, it binds directly to 16S rRNA where it nucleates assembly of the head domain of the 30S subunit. Is located at the subunit interface close to the decoding center, probably blocks exit of the E-site tRNA. This Polynucleobacter necessarius subsp. necessarius (strain STIR1) protein is Small ribosomal subunit protein uS7.